The primary structure comprises 448 residues: tRNA methyltransferase 10 homolog C (448 aa).

The transit peptide at 1-48 (MAFVNTLLRTIRCSAVHTLVQEGRSLSLLKASHQLTQSRKIMLSNHVR) directs the protein to the mitochondrion. Positions 137–165 (REVMKTNRKEKKKELKESKSKIESLDQLE) form a coiled coil. The disordered stretch occupies residues 144-167 (RKEKKKELKESKSKIESLDQLETK). Positions 190–382 (QRWKCVQAMK…SFVPNRKHDG (193 aa)) constitute an SAM-dependent MTase TRM10-type domain. Residues 429–448 (ERTDDTSIRSTRKRWWEEEN) form a disordered region.

Belongs to the class IV-like SAM-binding methyltransferase superfamily. TRM10 family. In terms of assembly, component of mitochondrial ribonuclease P. Interacts with HSD17B10/MRPP2.

Its subcellular location is the mitochondrion matrix. The protein localises to the mitochondrion nucleoid. It catalyses the reaction adenosine(9) in tRNA + S-adenosyl-L-methionine = N(1)-methyladenosine(9) in tRNA + S-adenosyl-L-homocysteine + H(+). The catalysed reaction is guanosine(9) in tRNA + S-adenosyl-L-methionine = N(1)-methylguanosine(9) in tRNA + S-adenosyl-L-homocysteine + H(+). The enzyme catalyses an adenosine in mRNA + S-adenosyl-L-methionine = an N(1)-methyladenosine in mRNA + S-adenosyl-L-homocysteine + H(+). Its function is as follows. Mitochondrial tRNA N(1)-methyltransferase involved in mitochondrial tRNA maturation. Component of mitochondrial ribonuclease P, which cleaves tRNA molecules in their 5'-ends. Together with hsd17b10/mrpp2, forms a subcomplex of the mitochondrial ribonuclease P, named MRPP1-MRPP2 subcomplex, which displays functions that are independent of the ribonuclease P activity. The MRPP1-MRPP2 subcomplex catalyzes the formation of N(1)-methylguanine and N(1)-methyladenine at position 9 (m1G9 and m1A9, respectively) in tRNAs; trmt10c/mrpp1 acting as the catalytic N(1)-methyltransferase subunit. The MRPP1-MRPP2 subcomplex also acts as a tRNA maturation platform: following 5'-end cleavage by the mitochondrial ribonuclease P complex, the MRPP1-MRPP2 subcomplex enhances the efficiency of 3'-processing catalyzed by ELAC2, retains the tRNA product after elac2 processing and presents the nascent tRNA to the mitochondrial CCA tRNA nucleotidyltransferase TRNT1 enzyme. In addition to tRNA N(1)-methyltransferase activity, trmt10c/mrpp1 also acts as a mRNA N(1)-methyltransferase by mediating methylation of adenosine residues at the N(1) position of MT-ND5 mRNA. The sequence is that of tRNA methyltransferase 10 homolog C from Xenopus tropicalis (Western clawed frog).